Here is a 21-residue protein sequence, read N- to C-terminus: GVYMEIGRCRXEAXRRRKEAV.

The enzyme catalyses ATP = 3',5'-cyclic AMP + diphosphate. This is Putative sperm adenylate cyclase from Mus musculus (Mouse).